Here is a 359-residue protein sequence, read N- to C-terminus: Olfactory receptor 8S1 (359 aa).

Over 1 to 25 (MALGNHSTITEFLLLGLSADPNIRA) the chain is Extracellular. N-linked (GlcNAc...) asparagine glycosylation occurs at asparagine 5. A helical transmembrane segment spans residues 26–46 (LLFVLFLGIYLLTIMENLMLL). The Cytoplasmic segment spans residues 47-54 (LMIRADSC). Residues 55–75 (LHKPMYFFLSHLSFVDLCFSS) traverse the membrane as a helical segment. Topologically, residues 76–99 (VIVPKMLENLLSQRKTISVEGCLA) are extracellular. A disulfide bridge links cysteine 97 with cysteine 189. A helical transmembrane segment spans residues 100–120 (QVFFVFVTAGTEACLLSGMAY). At 121 to 139 (DRHAAICRPLLYGQIMGKQ) the chain is on the cytoplasmic side. The chain crosses the membrane as a helical span at residues 140–160 (LYMHLVWGSWGLGFLDALINV). Residues 161 to 197 (LLAVNMVFCEAKIIHHYSYEMPSLLPLSCSDISRSLI) are Extracellular-facing. A helical transmembrane segment spans residues 198–217 (ALLCSTLLHGLGNFLLVFLS). The Cytoplasmic segment spans residues 218–237 (YTRIISTILSISSTSGRSKA). Residues 238 to 258 (FSTCSAHLTAVTLYYGSGLLR) traverse the membrane as a helical segment. Residues 259 to 269 (HLMPNSGSPIE) are Extracellular-facing. A helical transmembrane segment spans residues 270–290 (LIFSVQYTVVTPMLNSLIYSL). Residues 291–359 (KNKEVKGERS…ALRAAPTALP (69 aa)) lie on the Cytoplasmic side of the membrane. The tract at residues 301–338 (LRDSSHLPQLHKGQARWKRPAFTEGRREPGHPELSIPV) is disordered.

This sequence belongs to the G-protein coupled receptor 1 family.

Its subcellular location is the cell membrane. In terms of biological role, odorant receptor. In Homo sapiens (Human), this protein is Olfactory receptor 8S1 (OR8S1).